The primary structure comprises 335 residues: Corrinoid adenosyltransferase PduO (335 aa).

Residue His-206 coordinates heme.

Belongs to the Cob(I)alamin adenosyltransferase family. PduO subfamily. As to quaternary structure, forms a complex with PduS. It depends on heme b as a cofactor. Mg(2+) is required as a cofactor.

Its subcellular location is the bacterial microcompartment. It catalyses the reaction cob(I)alamin-[corrinoid adenosyltransferase] + ATP = apo-[corrinoid adenosyltransferase] + adenosylcob(III)alamin + triphosphate. It participates in polyol metabolism; 1,2-propanediol degradation. The protein operates within cofactor biosynthesis; adenosylcobalamin biosynthesis. In terms of biological role, converts cob(I)alamin to adenosylcobalamin (adenosylcob(III)alamin), the cofactor for propanediol dehydratase. Found in the bacterial microcompartment (BMC) dedicated to 1,2-propanediol (1,2-PD) degradation. PduS and PduO allow regeneration of the adenosylcobalamin cofactor within the BMC. Its function is as follows. Expression of a cosmid containing the full 21-gene pdu operon in E.coli allows E.coli to grow on 1,2-propanediol (1,2-PD) with the appearance of bacterial microcompartments (BMC) in its cytoplasm. Functionally, the 1,2-PD-specific bacterial microcompartment (BMC) concentrates low levels of 1,2-PD catabolic enzymes, concentrates volatile reaction intermediates thus enhancing pathway flux and keeps the level of toxic, mutagenic propionaldehyde low. This Citrobacter freundii protein is Corrinoid adenosyltransferase PduO.